The following is a 354-amino-acid chain: CX3C chemokine receptor 1 (354 aa).

Residues 1–32 (MSTSFPELDLENFEYDDSAEACYLGDIVAFGT) lie on the Extracellular side of the membrane. The helical transmembrane segment at 33 to 60 (IFLSVFYALVFTFGLVGNLLVVLALTNS) threads the bilayer. Over 61–70 (RKPKSITDIY) the chain is Cytoplasmic. Residues 71 to 91 (LLNLALSDLLFVATLPFWTHY) form a helical membrane-spanning segment. At 92-104 (LISHEGLHNAMCK) the chain is on the extracellular side. Cysteines 103 and 176 form a disulfide. Residues 105 to 126 (LTTAFFFIGFFGGIFFITVISI) form a helical membrane-spanning segment. The Cytoplasmic segment spans residues 127-143 (DRYLAIVLAANSMNNRT). The chain crosses the membrane as a helical span at residues 144–168 (VQHGVTISLGVWAAAILVASPQFMF). Residues 169 to 196 (TKRKDNECLGDYPEVLQEMWPVLRNSEV) are Extracellular-facing. A helical membrane pass occupies residues 197–216 (NILGFALPLLIMSFCYFRII). Residues 217–232 (QTLFSCKNRKKARAVR) are Cytoplasmic-facing. The chain crosses the membrane as a helical span at residues 233-257 (LILLVVFAFFLFWTPYNIMIFLETL). At 258 to 274 (KFYNFFPSCDMKRDLRL) the chain is on the extracellular side. Residues 275–298 (ALSVTETVAFSHCCLNPFIYAFAG) traverse the membrane as a helical segment. Over 299 to 354 (EKFRRYLGHLYRKCLAVLCGHPVHTGFSPESQRSRQDSILSSFTHYTSEGDGSLLL) the chain is Cytoplasmic. The residue at position 345 (T345) is a Phosphothreonine.

This sequence belongs to the G-protein coupled receptor 1 family. Found in a ternary complex with CX3CL1 and ITGAV:ITGB3 or ITGA4:ITGB1. This protein is not N-glycosylated which is unusual for G-protein-coupled receptors. Specifically expressed in subsets of leukocytes: expressed in monocytes, subsets of T-cells and natural killer (NK) cells in the circulation, dendritic cells, as well as in microglia in the central nervous system (CNS). Expression level subdivides blood monocytes into two major functional subsets; CD14(+)CD16(-)-CX3CR1(low) inflammatory monocytes and CD14(low)CD16(+)CX3CR1(high) homeostatic monocytes. Expressed in myeloid-derived mucosal dendritic cells, which populate the entire lamina propria of the small intestine.

The protein localises to the cell membrane. In terms of biological role, receptor for the C-X3-C chemokine fractalkine (CX3CL1) present on many early leukocyte cells; CX3CR1-CX3CL1 signaling exerts distinct functions in different tissue compartments, such as immune response, inflammation, cell adhesion and chemotaxis. CX3CR1-CX3CL1 signaling mediates cell migratory functions. Responsible for the recruitment of natural killer (NK) cells to inflamed tissues. Acts as a regulator of inflammation process leading to atherogenesis by mediating macrophage and monocyte recruitment to inflamed atherosclerotic plaques, promoting cell survival. Involved in airway inflammation by promoting interleukin 2-producing T helper (Th2) cell survival in inflamed lung. Involved in the migration of circulating monocytes to non-inflamed tissues, where they differentiate into macrophages and dendritic cells. Acts as a negative regulator of angiogenesis, probably by promoting macrophage chemotaxis. Plays a key role in brain microglia by regulating inflammatory response in the central nervous system (CNS) and regulating synapse maturation. Required to restrain the microglial inflammatory response in the CNS and the resulting parenchymal damage in response to pathological stimuli. Involved in brain development by participating in synaptic pruning, a natural process during which brain microglia eliminates extra synapses during postnatal development. Synaptic pruning by microglia is required to promote the maturation of circuit connectivity during brain development. Acts as an important regulator of the gut microbiota by controlling immunity to intestinal bacteria and fungi. Expressed in lamina propria dendritic cells in the small intestine, which form transepithelial dendrites capable of taking up bacteria in order to provide defense against pathogenic bacteria. Required to initiate innate and adaptive immune responses against dissemination of commensal fungi (mycobiota) component of the gut: expressed in mononuclear phagocytes (MNPs) and acts by promoting induction of antifungal IgG antibodies response to confer protection against disseminated C.albicans or C.auris infection. Also acts as a receptor for C-C motif chemokine CCL26, inducing cell chemotaxis. This Mus musculus (Mouse) protein is CX3C chemokine receptor 1.